A 454-amino-acid chain; its full sequence is GTPase Der (454 aa).

2 EngA-type G domains span residues 4–167 and 188–363; these read AIVA…SEDK and LELA…ASWQ. GTP is bound by residues 10–17, 56–60, 121–124, 194–201, 241–245, and 306–309; these read GKPNVGKS, DTPGL, NKTE, GRPNCGKS, DTAGV, and NKWD. Positions 364–450 constitute a KH-like domain; that stretch reads KRVTTGTLNQ…PVRLSFVKGK (87 aa).

The protein belongs to the TRAFAC class TrmE-Era-EngA-EngB-Septin-like GTPase superfamily. EngA (Der) GTPase family. As to quaternary structure, associates with the 50S ribosomal subunit.

In terms of biological role, GTPase that plays an essential role in the late steps of ribosome biogenesis. The polypeptide is GTPase Der (Orientia tsutsugamushi (strain Ikeda) (Rickettsia tsutsugamushi)).